Here is a 5058-residue protein sequence, read N- to C-terminus: ATP-binding cassette sub-family A member 13 (5058 aa).

The next 7 membrane-spanning stretches (helical) occupy residues Pro-23–Leu-43, Val-3568–Val-3588, Gly-3607–Ile-3627, Phe-3648–Leu-3668, Ala-3679–Leu-3699, Thr-3709–Leu-3729, and Phe-3752–Tyr-3772. In terms of domain architecture, ABC transporter 1 spans Val-3842 to Thr-4074. An ATP-binding site is contributed by Gly-3875–Thr-3882. 7 helical membrane-spanning segments follow: residues Thr-4226–Val-4246, Val-4458–Val-4478, Phe-4504–Ala-4524, Leu-4536–Leu-4556, Phe-4568–Met-4588, Val-4607–Leu-4627, and Met-4651–Leu-4671. One can recognise an ABC transporter 2 domain in the interval Leu-4718–Trp-4956. Gly-4754–Ser-4761 is an ATP binding site.

The protein belongs to the ABC transporter superfamily. In terms of tissue distribution, significantly expressed in the bone marrow, trachea, testis, thyroid and lung as well as in skin fibroblasts.

The protein resides in the cytoplasmic vesicle membrane. It catalyses the reaction cholesterol(in) + ATP + H2O = cholesterol(out) + ADP + phosphate + H(+). May mediate the cholesterol and gangliosides transport from the plasma membrane to intracellular vesicles in an ATP hydrolysis dependent manner, thus playing a role in their internalization by endocytic retrograde transport and may also participate in the endocytosis of synaptic vesicle in cortical neurons. The protein is ATP-binding cassette sub-family A member 13 of Homo sapiens (Human).